The primary structure comprises 244 residues: 5-oxoprolinase subunit A (244 aa).

This sequence belongs to the LamB/PxpA family. As to quaternary structure, forms a complex composed of PxpA, PxpB and PxpC.

The catalysed reaction is 5-oxo-L-proline + ATP + 2 H2O = L-glutamate + ADP + phosphate + H(+). Its function is as follows. Catalyzes the cleavage of 5-oxoproline to form L-glutamate coupled to the hydrolysis of ATP to ADP and inorganic phosphate. The chain is 5-oxoprolinase subunit A from Salmonella choleraesuis (strain SC-B67).